The sequence spans 1128 residues: Transient receptor potential-gamma protein (1128 aa).

Topologically, residues 1 to 325 (MMEEENTIRP…MALQAVDIIR (325 aa)) are cytoplasmic. ANK repeat units follow at residues 57 to 86 (LGRTALLMAIDNENLEMVELLINYNVDTKD) and 131 to 160 (PDITPLILAAHRDNYEIIKILLDRGAVLPM). A helical transmembrane segment spans residues 326 to 346 (IGIMFPIFSLAYILAPYSSIG). The Extracellular portion of the chain corresponds to 347–403 (QTMRKPFIKFICHSASYFTFLFLLMLASQRIETFIGGWFFADSSGMLNTMEELPTKR). A helical membrane pass occupies residues 404 to 424 (GAKPTFIEWLILAWVSGLIWS). At 425–444 (EVKQLWDVGLQEYLNDMWNV) the chain is on the cytoplasmic side. Residues 445-465 (IDFVTNSLYVATVALRVVSFF) traverse the membrane as a helical segment. The Extracellular segment spans residues 466 to 492 (QVQKEMIYNSHATDLPRERWDAWDPML). The chain crosses the membrane as a helical span at residues 493–513 (ISEGLFSAANIFSSLKLVYIF). At 514-535 (SVNPHLGPLQVSLSRMVMDIMK) the chain is on the cytoplasmic side. Residues 536 to 556 (FFFLYVLVLFAFGSGLNQLLW) traverse the membrane as a helical segment. The Extracellular segment spans residues 557 to 629 (YYADLEKKRC…GIKIFTRFWG (73 aa)). A helical transmembrane segment spans residues 630–650 (MLMFGTYSVINIVVLLNLLIA). The Cytoplasmic segment spans residues 651–1128 (MMNHSYQLIS…SCVSTTGAIG (478 aa)). Disordered regions lie at residues 865 to 898 (RQQSQAGSGGGGSESPTTPTAPQGTQGAAMTASS) and 1064 to 1111 (AAEA…SVNS). The span at 878-893 (ESPTTPTAPQGTQGAA) shows a compositional bias: low complexity. A compositionally biased stretch (polar residues) spans 1085–1111 (TQSQHDSVETNSTFTLSIDPSNTSVNS).

It belongs to the transient receptor (TC 1.A.4) family. STrpC subfamily. As to quaternary structure, interacts preferentially with trpl and interacts to a lower extent with trp. Expressed predominantly in the rhabdomeres of photoreceptor cells.

It localises to the cell projection. It is found in the rhabdomere membrane. A light-sensitive calcium channel that is required for inositide-mediated Ca(2+) entry in the retina during phospholipase C (PLC)-mediated phototransduction. Forms a regulated cation channel when heteromultimerized with trpl. The polypeptide is Transient receptor potential-gamma protein (Trpgamma) (Drosophila melanogaster (Fruit fly)).